A 154-amino-acid chain; its full sequence is Large ribosomal subunit protein uL13 (154 aa).

It belongs to the universal ribosomal protein uL13 family. In terms of assembly, part of the 50S ribosomal subunit.

Its function is as follows. This protein is one of the early assembly proteins of the 50S ribosomal subunit, although it is not seen to bind rRNA by itself. It is important during the early stages of 50S assembly. This is Large ribosomal subunit protein uL13 from Rhizobium etli (strain ATCC 51251 / DSM 11541 / JCM 21823 / NBRC 15573 / CFN 42).